We begin with the raw amino-acid sequence, 428 residues long: Histidine--tRNA ligase (428 aa).

It belongs to the class-II aminoacyl-tRNA synthetase family. As to quaternary structure, homodimer.

It is found in the cytoplasm. The enzyme catalyses tRNA(His) + L-histidine + ATP = L-histidyl-tRNA(His) + AMP + diphosphate + H(+). In Lactobacillus gasseri (strain ATCC 33323 / DSM 20243 / BCRC 14619 / CIP 102991 / JCM 1131 / KCTC 3163 / NCIMB 11718 / NCTC 13722 / AM63), this protein is Histidine--tRNA ligase.